Reading from the N-terminus, the 375-residue chain is Succinyl-diaminopimelate desuccinylase (375 aa).

Residue His-66 participates in Zn(2+) binding. The active site involves Asp-68. Asp-99 provides a ligand contact to Zn(2+). The active-site Proton acceptor is Glu-133. Zn(2+) is bound by residues Glu-134, Glu-162, and His-348.

The protein belongs to the peptidase M20A family. DapE subfamily. In terms of assembly, homodimer. Requires Zn(2+) as cofactor. Co(2+) serves as cofactor.

The catalysed reaction is N-succinyl-(2S,6S)-2,6-diaminopimelate + H2O = (2S,6S)-2,6-diaminopimelate + succinate. Its pathway is amino-acid biosynthesis; L-lysine biosynthesis via DAP pathway; LL-2,6-diaminopimelate from (S)-tetrahydrodipicolinate (succinylase route): step 3/3. Catalyzes the hydrolysis of N-succinyl-L,L-diaminopimelic acid (SDAP), forming succinate and LL-2,6-diaminopimelate (DAP), an intermediate involved in the bacterial biosynthesis of lysine and meso-diaminopimelic acid, an essential component of bacterial cell walls. The protein is Succinyl-diaminopimelate desuccinylase of Aeromonas salmonicida (strain A449).